The sequence spans 159 residues: NAD(P)H-quinone oxidoreductase subunit J, chloroplastic (159 aa).

Belongs to the complex I 30 kDa subunit family. As to quaternary structure, NDH is composed of at least 16 different subunits, 5 of which are encoded in the nucleus.

The protein localises to the plastid. Its subcellular location is the chloroplast thylakoid membrane. It catalyses the reaction a plastoquinone + NADH + (n+1) H(+)(in) = a plastoquinol + NAD(+) + n H(+)(out). The catalysed reaction is a plastoquinone + NADPH + (n+1) H(+)(in) = a plastoquinol + NADP(+) + n H(+)(out). In terms of biological role, NDH shuttles electrons from NAD(P)H:plastoquinone, via FMN and iron-sulfur (Fe-S) centers, to quinones in the photosynthetic chain and possibly in a chloroplast respiratory chain. The immediate electron acceptor for the enzyme in this species is believed to be plastoquinone. Couples the redox reaction to proton translocation, and thus conserves the redox energy in a proton gradient. The polypeptide is NAD(P)H-quinone oxidoreductase subunit J, chloroplastic (Brachypodium distachyon (Purple false brome)).